Consider the following 397-residue polypeptide: Leucine carboxyl methyltransferase 1 (397 aa).

The disordered stretch occupies residues 17 to 61 (AIQTPPPTDPNAAPAHRPAPRPALGRCRPPHRRRRRLRPPVRPPL). Positions 26-43 (PNAAPAHRPAPRPALGRC) are enriched in low complexity. The segment covering 44-55 (RPPHRRRRRLRP) has biased composition (basic residues). Residues arginine 119, glycine 142, aspartate 168, 224–225 (DL), and glutamate 259 contribute to the S-adenosyl-L-methionine site.

This sequence belongs to the methyltransferase superfamily. LCMT family.

The enzyme catalyses [phosphatase 2A protein]-C-terminal L-leucine + S-adenosyl-L-methionine = [phosphatase 2A protein]-C-terminal L-leucine methyl ester + S-adenosyl-L-homocysteine. Functionally, methylates the carboxyl group of the C-terminal leucine residue of protein phosphatase 2A catalytic subunits to form alpha-leucine ester residues. The chain is Leucine carboxyl methyltransferase 1 (PPM1) from Cryptococcus neoformans var. neoformans serotype D (strain B-3501A) (Filobasidiella neoformans).